The primary structure comprises 201 residues: 2-phospho-L-lactate guanylyltransferase (201 aa).

It belongs to the CofC family. As to quaternary structure, homodimer.

It carries out the reaction (2S)-2-phospholactate + GTP + H(+) = (2S)-lactyl-2-diphospho-5'-guanosine + diphosphate. The protein operates within cofactor biosynthesis; coenzyme F420 biosynthesis. Functionally, guanylyltransferase that catalyzes the activation of (2S)-2-phospholactate (2-PL) as (2S)-lactyl-2-diphospho-5'-guanosine, via the condensation of 2-PL with GTP. It is involved in the biosynthesis of coenzyme F420, a hydride carrier cofactor. The polypeptide is 2-phospho-L-lactate guanylyltransferase (Natronomonas pharaonis (strain ATCC 35678 / DSM 2160 / CIP 103997 / JCM 8858 / NBRC 14720 / NCIMB 2260 / Gabara) (Halobacterium pharaonis)).